The following is a 486-amino-acid chain: N-succinylglutamate 5-semialdehyde dehydrogenase (486 aa).

Residue 220-225 coordinates NAD(+); the sequence is GSSRTG. Catalysis depends on residues Glu-243 and Cys-277.

The protein belongs to the aldehyde dehydrogenase family. AstD subfamily.

The enzyme catalyses N-succinyl-L-glutamate 5-semialdehyde + NAD(+) + H2O = N-succinyl-L-glutamate + NADH + 2 H(+). The protein operates within amino-acid degradation; L-arginine degradation via AST pathway; L-glutamate and succinate from L-arginine: step 4/5. In terms of biological role, catalyzes the NAD-dependent reduction of succinylglutamate semialdehyde into succinylglutamate. This Shewanella putrefaciens (strain CN-32 / ATCC BAA-453) protein is N-succinylglutamate 5-semialdehyde dehydrogenase.